A 287-amino-acid chain; its full sequence is Pyridoxal 5'-phosphate synthase subunit PdxS (287 aa).

D21 serves as a coordination point for D-ribose 5-phosphate. Catalysis depends on K78, which acts as the Schiff-base intermediate with D-ribose 5-phosphate. G150 contacts D-ribose 5-phosphate. Position 162 (R162) interacts with D-glyceraldehyde 3-phosphate. D-ribose 5-phosphate is bound by residues G211 and 232–233 (GS).

It belongs to the PdxS/SNZ family. In the presence of PdxT, forms a dodecamer of heterodimers.

The catalysed reaction is aldehydo-D-ribose 5-phosphate + D-glyceraldehyde 3-phosphate + L-glutamine = pyridoxal 5'-phosphate + L-glutamate + phosphate + 3 H2O + H(+). The protein operates within cofactor biosynthesis; pyridoxal 5'-phosphate biosynthesis. Its function is as follows. Catalyzes the formation of pyridoxal 5'-phosphate from ribose 5-phosphate (RBP), glyceraldehyde 3-phosphate (G3P) and ammonia. The ammonia is provided by the PdxT subunit. Can also use ribulose 5-phosphate and dihydroxyacetone phosphate as substrates, resulting from enzyme-catalyzed isomerization of RBP and G3P, respectively. This chain is Pyridoxal 5'-phosphate synthase subunit PdxS, found in Tropheryma whipplei (strain Twist) (Whipple's bacillus).